A 448-amino-acid chain; its full sequence is MSSYSRAERAPWGDFPKVVRNGDLGSLTNEPEYQAAKQGDAEAALNLVERLISDDTVAQLKTLIGDDKPRIVPVLAVEAAGNNKIPAMMAVVLADRLGLEVETDIVQREKVARTGAGSDHRLAFNPTFEGEVIPGQKYIVVDDTLTMGGTIASLRGYIENNGGKVMAASVMTAHEGALDLAVKPKMLAGINEKHGPAMDAFWKETFGYGIDRLTQGEAGHLRAAPSVDAIRDRIAAARNEAVNRVGASRTATTARAGQQQSPAVKQSSGNSGEDLLQAAQEAETEQQALLESAPIEQTYQQTLALYVQAKHDQVERIEDRLEQLVDRQQARLQQLQSNAPGLLSLPRTKAAWQQQQAQQQARLQTLHTRLDMVREIKEGMGIHAPKIEELATRKMRADDPELAGDWDSMREAARRHQALMRKQEQEKKQAQERERGRSQSLGLSNKPS.

Disordered stretches follow at residues 243–273 (NRVG…NSGE) and 411–448 (EAAR…NKPS). Positions 246-261 (GASRTATTARAGQQQS) are enriched in low complexity. Positions 262 to 271 (PAVKQSSGNS) are enriched in polar residues. Residues 421–437 (RKQEQEKKQAQERERGR) show a composition bias toward basic and acidic residues. A compositionally biased stretch (polar residues) spans 438–448 (SQSLGLSNKPS).

It to H.influenzae HI_1407.

The polypeptide is Protein TraN (traN) (Escherichia coli).